A 261-amino-acid polypeptide reads, in one-letter code: tRNA pseudouridine synthase A (261 aa).

The active-site Nucleophile is the Asp51. A substrate-binding site is contributed by Tyr109.

The protein belongs to the tRNA pseudouridine synthase TruA family. In terms of assembly, homodimer.

It catalyses the reaction uridine(38/39/40) in tRNA = pseudouridine(38/39/40) in tRNA. Its function is as follows. Formation of pseudouridine at positions 38, 39 and 40 in the anticodon stem and loop of transfer RNAs. In Psychromonas ingrahamii (strain DSM 17664 / CCUG 51855 / 37), this protein is tRNA pseudouridine synthase A.